The chain runs to 129 residues: M-zodatoxin-Lt8f (129 aa).

The first 20 residues, 1–20 (MKYFVVALALVAAFACIAES), serve as a signal peptide directing secretion. A propeptide spanning residues 21–60 (KPAESEHELAEVEEENELADLEDAVWLEHLADLSDLEEAR) is cleaved from the precursor. The Processing quadruplet motif signature appears at 57–60 (EEAR).

In terms of processing, cleavage of the propeptide depends on the processing quadruplet motif (XXXR, with at least one of X being E). Expressed by the venom gland.

Its subcellular location is the secreted. Insecticidal, cytolytic and antimicrobial peptide. Has insecticidal activity against the flesh fly S.carnaria. Has antibacterial activity against the Gram-negative bacteria E.coli. Forms voltage-dependent, ion-permeable channels in membranes. At high concentration causes cell membrane lysis. This is M-zodatoxin-Lt8f (cit 1-7) from Lachesana tarabaevi (Spider).